The following is a 357-amino-acid chain: Sorbitol dehydrogenase (357 aa).

Position 2 is an N-acetylalanine (Ala-2). Residue Cys-45 participates in Zn(2+) binding. Tyr-51 is a substrate binding site. His-70, Glu-71, and Glu-156 together coordinate Zn(2+). Position 156 (Glu-156) interacts with substrate. Ser-169 carries the phosphoserine modification. Residues Ile-184, Asp-204, Arg-209, 273 to 275 (VGM), and 297 to 299 (VFR) each bind NAD(+). The substrate site is built by Arg-299 and Tyr-300.

Belongs to the zinc-containing alcohol dehydrogenase family. In terms of assembly, homotetramer; dimer of dimers. Zn(2+) is required as a cofactor. In terms of tissue distribution, expressed in liver and testis.

The protein localises to the mitochondrion membrane. It localises to the cell projection. The protein resides in the cilium. It is found in the flagellum. It catalyses the reaction keto-D-fructose + NADH + H(+) = D-sorbitol + NAD(+). The catalysed reaction is xylitol + NAD(+) = D-xylulose + NADH + H(+). It carries out the reaction L-iditol + NAD(+) = keto-L-sorbose + NADH + H(+). Its function is as follows. Polyol dehydrogenase that catalyzes the reversible NAD(+)-dependent oxidation of various sugar alcohols. Is active with D-sorbitol (D-glucitol) leading to the C2-oxidized product D-fructose. Is a key enzyme in the polyol pathway that interconverts glucose and fructose via sorbitol, which constitutes an important alternate route for glucose metabolism. May play a role in sperm motility by using sorbitol as an alternative energy source for sperm motility. The protein is Sorbitol dehydrogenase (Sord) of Rattus norvegicus (Rat).